Reading from the N-terminus, the 477-residue chain is Bifunctional protein HldE (477 aa).

The ribokinase stretch occupies residues 1-318 (MKVTLPEFER…ENAVRGRADT (318 aa)). 195–198 (NLSE) is a binding site for ATP. The active site involves aspartate 264. The segment at 344 to 477 (MTNGVFDILH…IKKIQKDSDK (134 aa)) is cytidylyltransferase.

In the N-terminal section; belongs to the carbohydrate kinase PfkB family. The protein in the C-terminal section; belongs to the cytidylyltransferase family. In terms of assembly, homodimer.

It catalyses the reaction D-glycero-beta-D-manno-heptose 7-phosphate + ATP = D-glycero-beta-D-manno-heptose 1,7-bisphosphate + ADP + H(+). It carries out the reaction D-glycero-beta-D-manno-heptose 1-phosphate + ATP + H(+) = ADP-D-glycero-beta-D-manno-heptose + diphosphate. It functions in the pathway nucleotide-sugar biosynthesis; ADP-L-glycero-beta-D-manno-heptose biosynthesis; ADP-L-glycero-beta-D-manno-heptose from D-glycero-beta-D-manno-heptose 7-phosphate: step 1/4. The protein operates within nucleotide-sugar biosynthesis; ADP-L-glycero-beta-D-manno-heptose biosynthesis; ADP-L-glycero-beta-D-manno-heptose from D-glycero-beta-D-manno-heptose 7-phosphate: step 3/4. Functionally, catalyzes the phosphorylation of D-glycero-D-manno-heptose 7-phosphate at the C-1 position to selectively form D-glycero-beta-D-manno-heptose-1,7-bisphosphate. In terms of biological role, catalyzes the ADP transfer from ATP to D-glycero-beta-D-manno-heptose 1-phosphate, yielding ADP-D-glycero-beta-D-manno-heptose. The sequence is that of Bifunctional protein HldE from Citrobacter koseri (strain ATCC BAA-895 / CDC 4225-83 / SGSC4696).